The chain runs to 429 residues: Glutamyl-tRNA reductase (429 aa).

Residues Thr-56–Arg-59, Ser-119, Glu-124–Gln-126, and Gln-130 contribute to the substrate site. Cys-57 serves as the catalytic Nucleophile. Gly-199–Ile-204 is a binding site for NADP(+).

Belongs to the glutamyl-tRNA reductase family. In terms of assembly, homodimer.

It carries out the reaction (S)-4-amino-5-oxopentanoate + tRNA(Glu) + NADP(+) = L-glutamyl-tRNA(Glu) + NADPH + H(+). The protein operates within porphyrin-containing compound metabolism; protoporphyrin-IX biosynthesis; 5-aminolevulinate from L-glutamyl-tRNA(Glu): step 1/2. Catalyzes the NADPH-dependent reduction of glutamyl-tRNA(Glu) to glutamate 1-semialdehyde (GSA). In Janthinobacterium sp. (strain Marseille) (Minibacterium massiliensis), this protein is Glutamyl-tRNA reductase.